We begin with the raw amino-acid sequence, 247 residues long: UDP-2,3-diacylglucosamine hydrolase (247 aa).

Mn(2+)-binding residues include aspartate 8, histidine 10, aspartate 41, asparagine 79, and histidine 115. 79 to 80 (NH) is a substrate binding site. Residues aspartate 123, lysine 165, lysine 168, and histidine 196 each contribute to the substrate site. Positions 196 and 198 each coordinate Mn(2+).

This sequence belongs to the LpxH family. Requires Mn(2+) as cofactor.

It is found in the cell inner membrane. It carries out the reaction UDP-2-N,3-O-bis[(3R)-3-hydroxytetradecanoyl]-alpha-D-glucosamine + H2O = 2-N,3-O-bis[(3R)-3-hydroxytetradecanoyl]-alpha-D-glucosaminyl 1-phosphate + UMP + 2 H(+). It functions in the pathway glycolipid biosynthesis; lipid IV(A) biosynthesis; lipid IV(A) from (3R)-3-hydroxytetradecanoyl-[acyl-carrier-protein] and UDP-N-acetyl-alpha-D-glucosamine: step 4/6. Functionally, hydrolyzes the pyrophosphate bond of UDP-2,3-diacylglucosamine to yield 2,3-diacylglucosamine 1-phosphate (lipid X) and UMP by catalyzing the attack of water at the alpha-P atom. Involved in the biosynthesis of lipid A, a phosphorylated glycolipid that anchors the lipopolysaccharide to the outer membrane of the cell. This chain is UDP-2,3-diacylglucosamine hydrolase, found in Blochmanniella floridana.